The sequence spans 1086 residues: DNA polymerase delta catalytic subunit (1086 aa).

Residues 1–64 (MTDRSSNEGV…KTSSFEDELA (64 aa)) form a disordered region. A compositionally biased stretch (basic and acidic residues) spans 29–58 (EITDVKRRRLSERNGYGDKKGSSSKEKTSS). Residues C993, C996, C1008, and C1011 each coordinate Zn(2+). The CysA-type zinc-finger motif lies at 993-1011 (CLGCKAPIKKGKTALCENC). C1040, C1043, C1053, and C1058 together coordinate [4Fe-4S] cluster. Positions 1040-1058 (CQRCQGSMHQDVICTSRDC) match the CysB motif motif.

It belongs to the DNA polymerase type-B family. In terms of assembly, heterotetramer that consist of the pol3, cdc1, cdc27 and cdm1 subunits. The pol3 subunit contains the polymerase active site and most likely the active site for the 3'-5' exonuclease activity. The cofactor is [4Fe-4S] cluster.

The protein localises to the nucleus. It carries out the reaction DNA(n) + a 2'-deoxyribonucleoside 5'-triphosphate = DNA(n+1) + diphosphate. In terms of biological role, catalytic component of DNA polymerase delta (DNA polymerase III) which participates in chromosomal DNA replication. Required during synthesis of the lagging DNA strands at the replication fork, binds at/or near replication origins and moves along DNA with the replication fork. Participates in leading strand synthesis during replication initiation and termination. Has 3'-5' proofreading exonuclease activity that corrects errors arising during DNA replication. The chain is DNA polymerase delta catalytic subunit (pol3) from Schizosaccharomyces pombe (strain 972 / ATCC 24843) (Fission yeast).